The sequence spans 313 residues: Solute carrier family 35 member E3 (313 aa).

A run of 9 helical transmembrane segments spans residues 17–37 (GLLF…WIYV), 40–60 (GFPN…GLYI), 77–97 (LLLL…SLQN), 126–143 (FSTR…GVIL), 153–173 (FLGM…QVWV), 187–206 (LLYY…VPFF), 225–245 (LMVL…YWII), 252–272 (TYNM…YVLF), and 275–295 (PLSI…LAYT).

This sequence belongs to the TPT transporter family. SLC35E subfamily.

The protein localises to the membrane. Putative transporter. The chain is Solute carrier family 35 member E3 (SLC35E3) from Homo sapiens (Human).